The chain runs to 333 residues: Holliday junction branch migration complex subunit RuvB (333 aa).

The large ATPase domain (RuvB-L) stretch occupies residues methionine 1–tyrosine 182. ATP contacts are provided by residues leucine 21, arginine 22, glycine 63, lysine 66, threonine 67, threonine 68, glutamate 129–phenylalanine 131, arginine 172, tyrosine 182, and arginine 219. Threonine 67 is a binding site for Mg(2+). The interval threonine 183–glutamine 253 is small ATPAse domain (RuvB-S). Positions lysine 256 to valine 333 are head domain (RuvB-H). Arginine 311 and arginine 316 together coordinate DNA.

The protein belongs to the RuvB family. As to quaternary structure, homohexamer. Forms an RuvA(8)-RuvB(12)-Holliday junction (HJ) complex. HJ DNA is sandwiched between 2 RuvA tetramers; dsDNA enters through RuvA and exits via RuvB. An RuvB hexamer assembles on each DNA strand where it exits the tetramer. Each RuvB hexamer is contacted by two RuvA subunits (via domain III) on 2 adjacent RuvB subunits; this complex drives branch migration. In the full resolvosome a probable DNA-RuvA(4)-RuvB(12)-RuvC(2) complex forms which resolves the HJ.

It is found in the cytoplasm. It catalyses the reaction ATP + H2O = ADP + phosphate + H(+). Its function is as follows. The RuvA-RuvB-RuvC complex processes Holliday junction (HJ) DNA during genetic recombination and DNA repair, while the RuvA-RuvB complex plays an important role in the rescue of blocked DNA replication forks via replication fork reversal (RFR). RuvA specifically binds to HJ cruciform DNA, conferring on it an open structure. The RuvB hexamer acts as an ATP-dependent pump, pulling dsDNA into and through the RuvAB complex. RuvB forms 2 homohexamers on either side of HJ DNA bound by 1 or 2 RuvA tetramers; 4 subunits per hexamer contact DNA at a time. Coordinated motions by a converter formed by DNA-disengaged RuvB subunits stimulates ATP hydrolysis and nucleotide exchange. Immobilization of the converter enables RuvB to convert the ATP-contained energy into a lever motion, pulling 2 nucleotides of DNA out of the RuvA tetramer per ATP hydrolyzed, thus driving DNA branch migration. The RuvB motors rotate together with the DNA substrate, which together with the progressing nucleotide cycle form the mechanistic basis for DNA recombination by continuous HJ branch migration. Branch migration allows RuvC to scan DNA until it finds its consensus sequence, where it cleaves and resolves cruciform DNA. This chain is Holliday junction branch migration complex subunit RuvB, found in Bacillus cereus (strain Q1).